We begin with the raw amino-acid sequence, 613 residues long: MAFKARSSRFSVKMVEDTGGSQDLINNSFSSFIEEKSKESKKNKGNVTISDRSSNPFHISRDMDYFLLREQEQNQAIAEREQKKILRVHQKMTYASKVSAKHTSLRRELQLEDEMEQQLLNAEAKEMNCFRENNDWKLAMTRERKREPETLNDYMEKRRSMFLLQYALAMKRNEIQRLEMLATREENRLERAEKFLEKDASLFDEFLRENDRNSVQAMRMAEKETKIKTEKIVEIRELTAQITSIKSEISKFEDTLKHYKIYKEFLYKLSPKEWLDEQQEKHLAFKRAKESSELTRNNSTAILFGDKGSGSKSKTAFLWKEVPGLKKVTKTGRLVKALSSSIQSLPQVGQLTQLSPHSELDSRLSSTMFPSQDDTDSDGEELALYFTEPQQLLDVFTKLEEENLSLIQNTQEMEETLDELNVTLKNTQIRMDKEVNLLKQWIASMMISISKEEESAAELELKARVFHFGEYQGDQQDTMLESLNHKVLEVYRKCVGMQQEANLGTVQMLTVVERQLDELLENLERVPQVKIEQAEKAKERERRMRLREEKAMMQKQLQEERLQRARARAQAKIKKKRGRKLISRSHPPVIKVKEVREQTLINKDKEEMLFFFT.

Residues 36-55 (KSKESKKNKGNVTISDRSSN) are disordered. The span at 45-55 (GNVTISDRSSN) shows a compositional bias: polar residues. Coiled coils occupy residues 167–198 (ALAM…FLEK), 233–260 (VEIR…KHYK), 396–435 (FTKL…DKEV), and 504–580 (GTVQ…RGRK).

Belongs to the CFAP100 family.

It is found in the cytoplasm. It localises to the cytoskeleton. The protein localises to the cilium axoneme. Its function is as follows. May play a role in ciliary/flagellar motility by regulating the assembly and the activity of axonemal inner dynein arm. This chain is Cilia- and flagella-associated protein 100, found in Mus musculus (Mouse).